The sequence spans 123 residues: cAMP-responsive element-binding protein-like 2 (123 aa).

Residues M1 to I24 are disordered. Residues K10–P21 are compositionally biased toward basic residues. In terms of domain architecture, bZIP spans K23–S86. The tract at residues K29 to R60 is basic motif. A leucine-zipper region spans residues I62–L69. Positions T93–N123 are disordered. Over residues D114–N123 the composition is skewed to polar residues.

It belongs to the bZIP family. ATF subfamily. As to quaternary structure, interacts with CREB1; regulates CREB1 phosphorylation, stability and transcriptional activity. Phosphorylated by AMPK.

The protein resides in the nucleus. Its function is as follows. Probable regulator of CREB1 transcriptional activity which is involved in adipose cells differentiation. May also play a regulatory role in the cell cycle. This is cAMP-responsive element-binding protein-like 2 (Crebl2) from Rattus norvegicus (Rat).